Here is a 780-residue protein sequence, read N- to C-terminus: Translation initiation factor IF-2 (780 aa).

Residues 44 to 194 (RQLDNAVDGT…TPPKPKELPE (151 aa)) are disordered. A compositionally biased stretch (basic and acidic residues) spans 53–65 (TNKKAEAPKKETT). The span at 66 to 81 (SNENGNSKGPNKPNMT) shows a compositional bias: polar residues. Composition is skewed to low complexity over residues 82 to 93 (NSNEKSNKPNKP) and 117 to 168 (ANTS…NNKG). The region spanning 281–450 (ERPPVVTIMG…LLVSEVEELK (170 aa)) is the tr-type G domain. The interval 290–297 (GHVDHGKT) is G1. Residue 290–297 (GHVDHGKT) participates in GTP binding. The segment at 315–319 (GITQH) is G2. Residues 336–339 (DTPG) are G3. GTP-binding positions include 336-340 (DTPGH) and 390-393 (NKID). The G4 stretch occupies residues 390-393 (NKID). The tract at residues 426–428 (SAK) is G5.

The protein belongs to the TRAFAC class translation factor GTPase superfamily. Classic translation factor GTPase family. IF-2 subfamily.

It localises to the cytoplasm. In terms of biological role, one of the essential components for the initiation of protein synthesis. Protects formylmethionyl-tRNA from spontaneous hydrolysis and promotes its binding to the 30S ribosomal subunits. Also involved in the hydrolysis of GTP during the formation of the 70S ribosomal complex. The polypeptide is Translation initiation factor IF-2 (Listeria welshimeri serovar 6b (strain ATCC 35897 / DSM 20650 / CCUG 15529 / CIP 8149 / NCTC 11857 / SLCC 5334 / V8)).